We begin with the raw amino-acid sequence, 565 residues long: Wee1-like protein kinase 2 (565 aa).

The 277-residue stretch at 217 to 493 folds into the Protein kinase domain; the sequence is FLELERIGVG…TKHPILRPSL (277 aa). Residues 223–231 and lysine 246 contribute to the ATP site; that span reads IGVGEFGSV. Aspartate 344 functions as the Proton acceptor in the catalytic mechanism. Residues asparagine 349 and aspartate 383 each contribute to the Mg(2+) site. A coiled-coil region spans residues 496-522; that stretch reads AVQLQKQLNVEKCKTAMLERELKAARL. The tract at residues 531–553 is disordered; it reads PLGNANLQESETSPKKNNKRLVG.

Belongs to the protein kinase superfamily. Ser/Thr protein kinase family. WEE1 subfamily.

It is found in the nucleus. The catalysed reaction is L-tyrosyl-[protein] + ATP = O-phospho-L-tyrosyl-[protein] + ADP + H(+). In terms of biological role, oocyte-specific protein tyrosine kinase that phosphorylates and inhibits CDK1 and acts as a key regulator of meiosis. Required to maintain meiotic arrest in oocytes by phosphorylating CDK1 at 'Tyr-15', leading to inhibit CDK1 activity and prevent meiotic reentry. The polypeptide is Wee1-like protein kinase 2 (WEE2) (Gallus gallus (Chicken)).